The following is a 701-amino-acid chain: Elongation factor G (701 aa).

The 283-residue stretch at 8–290 (KHYRNIGISA…AVIEYLPAPI (283 aa)) folds into the tr-type G domain. Residues 17 to 24 (AHIDAGKT), 88 to 92 (DTPGH), and 142 to 145 (NKMD) contribute to the GTP site.

This sequence belongs to the TRAFAC class translation factor GTPase superfamily. Classic translation factor GTPase family. EF-G/EF-2 subfamily.

It is found in the cytoplasm. In terms of biological role, catalyzes the GTP-dependent ribosomal translocation step during translation elongation. During this step, the ribosome changes from the pre-translocational (PRE) to the post-translocational (POST) state as the newly formed A-site-bound peptidyl-tRNA and P-site-bound deacylated tRNA move to the P and E sites, respectively. Catalyzes the coordinated movement of the two tRNA molecules, the mRNA and conformational changes in the ribosome. This is Elongation factor G from Hamiltonella defensa subsp. Acyrthosiphon pisum (strain 5AT).